The sequence spans 37 residues: Alpha-conotoxin TxID (37 aa).

Residues 1–21 (FDGRNAAGNDKMSALMALTTR) constitute a propeptide that is removed on maturation. Intrachain disulfides connect C23–C29 and C24–C36. C36 carries the post-translational modification Cysteine amide.

This sequence belongs to the conotoxin A superfamily. Post-translationally, unmodified Met-32 is essential for toxin binding to rat alpha-3-beta-4/CHRNA3-CHRNB4 nAChR. An oxidation of this methionine provokes a 13.3-fold decrease in inhibitory potency (IC(50)=245 nM instead of 18 nM). Owing to its potent activity, derivatives of this toxin have a potential in the development of a novel drug. Unfortunately, the oxidation of the methionine is readily to happen during toxin synthesis and oxidation steps as well as under oxidative environment in vivo, which should still be considered to find a solution to this major drawback. In terms of tissue distribution, expressed by the venom duct.

It is found in the secreted. Functionally, alpha-conotoxins act on postsynaptic membranes, they bind to the nicotinic acetylcholine receptors (nAChR) and thus inhibit them. This toxin inhibits alpha-3-beta-4/CHRNA3-CHRNB4 (IC(50)=3.6-18.38 nM), alpha-6/alpha-3-beta-4 (CHRNA6/CHRNA3-CHRNB4) (IC(50)=33.9-94.1 nM), and alpha-2-beta-4/CHRNA2-CHRNB4 (IC(50)=4550 nM) nAChRs. The toxin competes with agonists in the orthosteric binding site of alpha-3-beta-4/CHRNA3-CHRNB4 and alpha-6-beta-4/CHRNA6-CHRNB4. The protein is Alpha-conotoxin TxID of Conus textile (Cloth-of-gold cone).